A 451-amino-acid chain; its full sequence is NADH-quinone oxidoreductase subunit H (451 aa).

9 helical membrane passes run 30-50, 98-118, 138-158, 176-196, 213-233, 262-282, 302-322, 336-356, and 368-388; these read LIIVKTLGVFAFLVLATLFMI, AVFILAPVISATPAFLAFAVI, LPVAVLFVLAMSSLGVYGIVL, AAQVVSYEIAMGLSFVGVFLY, WGILWAGVSFAVYAIAMVGET, LFYLAEYINMVTVSALMTTLF, WWPVLWFLIKLGIVLFVFIWL, QFGWKVLIPVNLTWILVEAAI, and VIPFAIFLALVAVGTYVADLV.

Belongs to the complex I subunit 1 family. In terms of assembly, NDH-1 is composed of 14 different subunits. Subunits NuoA, H, J, K, L, M, N constitute the membrane sector of the complex.

Its subcellular location is the cell membrane. It catalyses the reaction a quinone + NADH + 5 H(+)(in) = a quinol + NAD(+) + 4 H(+)(out). In terms of biological role, NDH-1 shuttles electrons from NADH, via FMN and iron-sulfur (Fe-S) centers, to quinones in the respiratory chain. The immediate electron acceptor for the enzyme in this species is believed to be ubiquinone. Couples the redox reaction to proton translocation (for every two electrons transferred, four hydrogen ions are translocated across the cytoplasmic membrane), and thus conserves the redox energy in a proton gradient. This subunit may bind ubiquinone. The chain is NADH-quinone oxidoreductase subunit H from Acidothermus cellulolyticus (strain ATCC 43068 / DSM 8971 / 11B).